A 528-amino-acid polypeptide reads, in one-letter code: 2-isopropylmalate synthase (528 aa).

One can recognise a Pyruvate carboxyltransferase domain in the interval 12–279 (IRIFDTTLRD…DSSINTPRIV (268 aa)). Mn(2+) is bound by residues Asp-21, His-214, His-216, and Asn-250. The regulatory domain stretch occupies residues 401-528 (RLASMTISDV…STDVPTPATA (128 aa)).

This sequence belongs to the alpha-IPM synthase/homocitrate synthase family. LeuA type 1 subfamily. As to quaternary structure, homodimer. Mn(2+) is required as a cofactor.

Its subcellular location is the cytoplasm. The catalysed reaction is 3-methyl-2-oxobutanoate + acetyl-CoA + H2O = (2S)-2-isopropylmalate + CoA + H(+). Its pathway is amino-acid biosynthesis; L-leucine biosynthesis; L-leucine from 3-methyl-2-oxobutanoate: step 1/4. Its function is as follows. Catalyzes the condensation of the acetyl group of acetyl-CoA with 3-methyl-2-oxobutanoate (2-ketoisovalerate) to form 3-carboxy-3-hydroxy-4-methylpentanoate (2-isopropylmalate). The chain is 2-isopropylmalate synthase from Stenotrophomonas maltophilia (strain K279a).